Here is a 305-residue protein sequence, read N- to C-terminus: tRNA-splicing endonuclease (305 aa).

Residues Tyr-246, His-257, and Lys-287 contribute to the active site.

This sequence belongs to the tRNA-intron endonuclease family. Archaeal long subfamily. Homodimer.

The catalysed reaction is pretRNA = a 3'-half-tRNA molecule with a 5'-OH end + a 5'-half-tRNA molecule with a 2',3'-cyclic phosphate end + an intron with a 2',3'-cyclic phosphate and a 5'-hydroxyl terminus.. In terms of biological role, endonuclease that removes tRNA introns. Cleaves pre-tRNA at the 5'- and 3'-splice sites to release the intron. The products are an intron and two tRNA half-molecules bearing 2',3' cyclic phosphate and 5'-OH termini. Recognizes a pseudosymmetric substrate in which 2 bulged loops of 3 bases are separated by a stem of 4 bp. The sequence is that of tRNA-splicing endonuclease from Archaeoglobus fulgidus (strain ATCC 49558 / DSM 4304 / JCM 9628 / NBRC 100126 / VC-16).